The following is a 430-amino-acid chain: 3-phosphoshikimate 1-carboxyvinyltransferase (430 aa).

Residues lysine 33, serine 34, and arginine 38 each coordinate 3-phosphoshikimate. Lysine 33 provides a ligand contact to phosphoenolpyruvate. Phosphoenolpyruvate is bound by residues glycine 101 and arginine 129. 3-phosphoshikimate contacts are provided by serine 172, serine 173, glutamine 174, serine 201, glutamate 319, and histidine 346. Glutamine 174 lines the phosphoenolpyruvate pocket. Catalysis depends on glutamate 319, which acts as the Proton acceptor. Positions 350, 391, and 416 each coordinate phosphoenolpyruvate.

This sequence belongs to the EPSP synthase family. As to quaternary structure, monomer.

It is found in the cytoplasm. The enzyme catalyses 3-phosphoshikimate + phosphoenolpyruvate = 5-O-(1-carboxyvinyl)-3-phosphoshikimate + phosphate. It participates in metabolic intermediate biosynthesis; chorismate biosynthesis; chorismate from D-erythrose 4-phosphate and phosphoenolpyruvate: step 6/7. Its function is as follows. Catalyzes the transfer of the enolpyruvyl moiety of phosphoenolpyruvate (PEP) to the 5-hydroxyl of shikimate-3-phosphate (S3P) to produce enolpyruvyl shikimate-3-phosphate and inorganic phosphate. The polypeptide is 3-phosphoshikimate 1-carboxyvinyltransferase (Corynebacterium glutamicum (strain R)).